Here is a 277-residue protein sequence, read N- to C-terminus: Indole-3-glycerol phosphate synthase (277 aa).

It belongs to the TrpC family.

The catalysed reaction is 1-(2-carboxyphenylamino)-1-deoxy-D-ribulose 5-phosphate + H(+) = (1S,2R)-1-C-(indol-3-yl)glycerol 3-phosphate + CO2 + H2O. It participates in amino-acid biosynthesis; L-tryptophan biosynthesis; L-tryptophan from chorismate: step 4/5. The sequence is that of Indole-3-glycerol phosphate synthase from Pseudomonas putida (strain ATCC 700007 / DSM 6899 / JCM 31910 / BCRC 17059 / LMG 24140 / F1).